Consider the following 523-residue polypeptide: Glycerate kinase (523 aa).

S60 is modified (phosphoserine).

Belongs to the glycerate kinase type-2 family. As to expression, widely expressed.

The protein localises to the cytoplasm. It is found in the mitochondrion. It carries out the reaction (R)-glycerate + ATP = (2R)-3-phosphoglycerate + ADP + H(+). This chain is Glycerate kinase (GLYCTK), found in Homo sapiens (Human).